The sequence spans 509 residues: GMP synthase [glutamine-hydrolyzing] (509 aa).

In terms of domain architecture, Glutamine amidotransferase type-1 spans 4–194; that stretch reads KVIVLDFGGQ…LYEICGLTPD (191 aa). The active-site Nucleophile is the cysteine 81. Active-site residues include histidine 168 and glutamate 170. Residues 195-384 enclose the GMPS ATP-PPase domain; that stretch reads WTMESFAQKA…LGLPESIVWR (190 aa). ATP is bound at residue 222–228; that stretch reads SGGVDSS.

In terms of assembly, homodimer.

The enzyme catalyses XMP + L-glutamine + ATP + H2O = GMP + L-glutamate + AMP + diphosphate + 2 H(+). The protein operates within purine metabolism; GMP biosynthesis; GMP from XMP (L-Gln route): step 1/1. In terms of biological role, catalyzes the synthesis of GMP from XMP. The polypeptide is GMP synthase [glutamine-hydrolyzing] (Carboxydothermus hydrogenoformans (strain ATCC BAA-161 / DSM 6008 / Z-2901)).